The sequence spans 171 residues: Antimicrobial protein CAP18 (171 aa).

Positions 1–29 (METHKHGPSLAWWSLLLLLLGLLMPPAIA) are cleaved as a signal peptide. 2 disulfide bridges follow: Cys-85–Cys-96 and Cys-107–Cys-124.

This sequence belongs to the cathelicidin family. Neutrophils.

It is found in the secreted. Functionally, CAP18 binds to the lipid A moiety of bacterial lipopolysaccharides (LPS), a glycolipid present in the outer membrane of all Gram-negative bacteria. Has antibiotic activity. The chain is Antimicrobial protein CAP18 (CAP18) from Oryctolagus cuniculus (Rabbit).